The primary structure comprises 793 residues: Putative potassium transporter 8 (793 aa).

Topologically, residues 1–22 (MDLEFGRGMRSPQRDSWKTTLL) are cytoplasmic. The chain crosses the membrane as a helical span at residues 23-43 (LAYQSLGVVYGDLSISPLYVF). Residues 44 to 59 (KSTFAEDIQHSETNEE) lie on the Extracellular side of the membrane. A helical transmembrane segment spans residues 60–80 (IFGVLSFVFWTLTLIPLIKYV). Residues 81-151 (SIVLRADDNG…EKHKKLHTAL (71 aa)) are Cytoplasmic-facing. A helical membrane pass occupies residues 152-172 (LIMVLIGTCMVIGDGVLTPAI). Topologically, residues 173 to 191 (SVFSAVSGLEFSLSKDHRE) are extracellular. Residues 192–212 (YAVIPITCVILAFLFALQHYG) traverse the membrane as a helical segment. Residues 213–215 (THR) lie on the Cytoplasmic side of the membrane. Residues 216 to 236 (VGFLFAPIVLAWLICMSALGL) form a helical membrane-spanning segment. Residues 237–264 (YNIIHWNPHVYQALNPCYMFKFLKKTRK) lie on the Extracellular side of the membrane. The chain crosses the membrane as a helical span at residues 265–285 (YGWMSLGGILLCMTGSEAMFA). The Cytoplasmic segment spans residues 286–292 (DLGHFSY). A helical membrane pass occupies residues 293–313 (SAIQLAFTSLVYPALILAYMG). Topologically, residues 314 to 343 (QAAYLSKHHDFYSNSQVGFYIAVPDKVRWP) are extracellular. Residues 344–364 (VLVLAILASVVGSQAIISGTF) traverse the membrane as a helical segment. Over 365-391 (SIINQSQSLSCFPRVKVVHTSDKIHGQ) the chain is Cytoplasmic. A helical transmembrane segment spans residues 392-412 (IYIPEINWLLMILCIAVTVGF). Topologically, residues 413 to 422 (RDTKHMGNAS) are extracellular. Asn420 carries an N-linked (GlcNAc...) asparagine glycan. A helical transmembrane segment spans residues 423–443 (GLAVITVMLVTTCLTSLVIML). Over 444–448 (CWRRP) the chain is Cytoplasmic. Residues 449–469 (PVLALCFLLFFGSVEALYFSA) form a helical membrane-spanning segment. Over 470-473 (SLIK) the chain is Extracellular. The chain crosses the membrane as a helical span at residues 474–494 (FLEGAWLPILLALFLMAVMLV). Topologically, residues 495–793 (WHYTTIKKYE…LLEVGMVYVL (299 aa)) are cytoplasmic. The segment covering 664–675 (DSVQHSSAASVE) has biased composition (polar residues). Positions 664–698 (DSVQHSSAASVETTTTRRRSGGGDDDGSPGGGGGR) are disordered.

It belongs to the HAK/KUP transporter (TC 2.A.72.3) family.

The protein localises to the membrane. Its function is as follows. High-affinity potassium transporter. The chain is Putative potassium transporter 8 (HAK8) from Oryza sativa subsp. japonica (Rice).